The following is an 81-amino-acid chain: Three-finger toxin 3FTx-Oxy6 (81 aa).

Residues 1–21 form the signal peptide; it reads MKTLLLSLVVMTIVYLDLGYT. 4 disulfide bridges follow: cysteine 24/cysteine 43, cysteine 36/cysteine 61, cysteine 65/cysteine 73, and cysteine 74/cysteine 79.

It belongs to the three-finger toxin family. Short-chain subfamily. In terms of tissue distribution, expressed by the venom gland.

Its subcellular location is the secreted. The chain is Three-finger toxin 3FTx-Oxy6 from Oxyuranus microlepidotus (Inland taipan).